A 95-amino-acid chain; its full sequence is uncharacterized protein (95 aa).

Tandem repeats lie at residues 67–74 (GCGCGCGC) and 85–92 (CGGCCGCG). A 2 X 8 AA approximate repeats region spans residues 67-92 (GCGCGCGCATVAAVSPVPCGGCCGCG).

This is an uncharacterized protein from Caenorhabditis elegans.